We begin with the raw amino-acid sequence, 126 residues long: Fluoride-specific ion channel FluC (126 aa).

A run of 4 helical transmembrane segments spans residues 9 to 29, 35 to 55, 63 to 83, and 94 to 114; these read LAVF…GFQL, LTAT…LYAI, LLHL…SFVL, and WSIG…AAIL. Na(+) is bound by residues Gly-73 and Ser-76.

It belongs to the fluoride channel Fluc/FEX (TC 1.A.43) family.

It localises to the cell inner membrane. The catalysed reaction is fluoride(in) = fluoride(out). With respect to regulation, na(+) is not transported, but it plays an essential structural role and its presence is essential for fluoride channel function. Functionally, fluoride-specific ion channel. Important for reducing fluoride concentration in the cell, thus reducing its toxicity. This Ruegeria pomeroyi (strain ATCC 700808 / DSM 15171 / DSS-3) (Silicibacter pomeroyi) protein is Fluoride-specific ion channel FluC.